A 263-amino-acid chain; its full sequence is Probable ribosomal RNA small subunit methyltransferase A (263 aa).

Residues leucine 12, glycine 37, glutamate 58, aspartate 83, and asparagine 100 each coordinate S-adenosyl-L-methionine.

Belongs to the class I-like SAM-binding methyltransferase superfamily. rRNA adenine N(6)-methyltransferase family. RsmA subfamily.

The protein resides in the cytoplasm. Functionally, specifically dimethylates two adjacent adenosines in the loop of a conserved hairpin near the 3'-end of 16S rRNA in the 30S particle. May play a critical role in biogenesis of 30S subunits. The protein is Probable ribosomal RNA small subunit methyltransferase A of Methanococcus maripaludis (strain C7 / ATCC BAA-1331).